Here is a 390-residue protein sequence, read N- to C-terminus: MDSEKKNKKKQIAILGSTGSIGTQALQVIEEHPDLYEAYALTANNRVELLIAQARKFQPEVVVIANEEKYAQLKEALSDLPIKVYAGIDAVCQIVEAGPVDMVLTAMVGYAGLKPTINAIRAKKAIALANKETLVVAGELINQLAQQYHTPILPVDSEHSAVFQCLAGEVGNPIEKVILTASGGPFRTCTLEQLKSVTKTQALKHPNWEMGAKITIDSASMMNKGFEVIEAKWLFGVQPSQIEVVVHPQSVIHSMVQFEDGAVKAQLGMPDMRLPIQYAFSYPDRICSSFDRLDFTQCTNLTFEQPDTKRFRNLALAYEAMYRGGNMPCIVNAANEVVVAAFLRDGISFLGMSDVIEKTMERAAFVAAPAYDDYVATDAEARRIAAELIP.

The NADPH site is built by Thr-18, Gly-19, Ser-20, Ile-21, and Asn-130. Lys-131 is a 1-deoxy-D-xylulose 5-phosphate binding site. Glu-132 contributes to the NADPH binding site. Asp-156 contacts Mn(2+). Ser-157, Glu-158, Ser-182, and His-205 together coordinate 1-deoxy-D-xylulose 5-phosphate. Residue Glu-158 participates in Mn(2+) binding. NADPH is bound at residue Gly-211. Positions 218, 223, 224, and 227 each coordinate 1-deoxy-D-xylulose 5-phosphate. Glu-227 is a Mn(2+) binding site.

It belongs to the DXR family. It depends on Mg(2+) as a cofactor. Mn(2+) is required as a cofactor.

The catalysed reaction is 2-C-methyl-D-erythritol 4-phosphate + NADP(+) = 1-deoxy-D-xylulose 5-phosphate + NADPH + H(+). Its pathway is isoprenoid biosynthesis; isopentenyl diphosphate biosynthesis via DXP pathway; isopentenyl diphosphate from 1-deoxy-D-xylulose 5-phosphate: step 1/6. In terms of biological role, catalyzes the NADPH-dependent rearrangement and reduction of 1-deoxy-D-xylulose-5-phosphate (DXP) to 2-C-methyl-D-erythritol 4-phosphate (MEP). This chain is 1-deoxy-D-xylulose 5-phosphate reductoisomerase, found in Bacteroides thetaiotaomicron (strain ATCC 29148 / DSM 2079 / JCM 5827 / CCUG 10774 / NCTC 10582 / VPI-5482 / E50).